Consider the following 446-residue polypeptide: Maltoporin (446 aa).

Residues 1–25 form the signal peptide; sequence MMITLRKLPLAVAVAAGVMSAQAMA.

It belongs to the porin LamB (TC 1.B.3) family. As to quaternary structure, homotrimer formed of three 18-stranded antiparallel beta-barrels, containing three independent channels.

Its subcellular location is the cell outer membrane. The catalysed reaction is beta-maltose(in) = beta-maltose(out). Involved in the transport of maltose and maltodextrins. In Escherichia coli O7:K1 (strain IAI39 / ExPEC), this protein is Maltoporin.